Here is a 426-residue protein sequence, read N- to C-terminus: 3-phosphoshikimate 1-carboxyvinyltransferase (426 aa).

The 3-phosphoshikimate site is built by Lys22, Ser23, and Arg27. Lys22 is a phosphoenolpyruvate binding site. Phosphoenolpyruvate contacts are provided by Gly96 and Arg124. 3-phosphoshikimate-binding residues include Ser170, Ser171, Gln172, Ser198, Asp314, Asn337, and Lys341. Phosphoenolpyruvate is bound at residue Gln172. Asp314 (proton acceptor) is an active-site residue. Phosphoenolpyruvate-binding residues include Arg345, Arg387, and Lys412.

It belongs to the EPSP synthase family. In terms of assembly, monomer.

It localises to the cytoplasm. The catalysed reaction is 3-phosphoshikimate + phosphoenolpyruvate = 5-O-(1-carboxyvinyl)-3-phosphoshikimate + phosphate. It participates in metabolic intermediate biosynthesis; chorismate biosynthesis; chorismate from D-erythrose 4-phosphate and phosphoenolpyruvate: step 6/7. In terms of biological role, catalyzes the transfer of the enolpyruvyl moiety of phosphoenolpyruvate (PEP) to the 5-hydroxyl of shikimate-3-phosphate (S3P) to produce enolpyruvyl shikimate-3-phosphate and inorganic phosphate. This chain is 3-phosphoshikimate 1-carboxyvinyltransferase, found in Shewanella sp. (strain W3-18-1).